The sequence spans 146 residues: Hemoglobin subunit beta (146 aa).

N-acetylvaline is present on valine 1. One can recognise a Globin domain in the interval 2–146 (HLSGEEKTAL…VANALAHKYH (145 aa)). Serine 44 carries the phosphoserine modification. The residue at position 59 (lysine 59) is an N6-acetyllysine. A heme b-binding site is contributed by histidine 63. At lysine 82 the chain carries N6-acetyllysine. Histidine 92 is a binding site for heme b. S-nitrosocysteine is present on cysteine 93. Residue lysine 144 is modified to N6-acetyllysine.

Belongs to the globin family. In terms of assembly, heterotetramer of two alpha chains and two beta chains. Red blood cells.

Functionally, involved in oxygen transport from the lung to the various peripheral tissues. This is Hemoglobin subunit beta from Tamiasciurus hudsonicus (American red squirrel).